The following is a 342-amino-acid chain: Serine/threonine-protein kinase ISR1 (342 aa).

A Protein kinase domain is found at 59–342 (WRLTRVLGCG…SNARVAEHAF (284 aa)). ATP-binding positions include 65-73 (LGCGSVACV) and lysine 84. Aspartate 190 functions as the Proton acceptor in the catalytic mechanism.

Belongs to the protein kinase superfamily. Ser/Thr protein kinase family.

It catalyses the reaction L-seryl-[protein] + ATP = O-phospho-L-seryl-[protein] + ADP + H(+). The enzyme catalyses L-threonyl-[protein] + ATP = O-phospho-L-threonyl-[protein] + ADP + H(+). Its function is as follows. Probable serine/threonine protein kinase which may function redundantly with MPK1-independent branch of the PCK1 pathway. This Eremothecium gossypii (strain ATCC 10895 / CBS 109.51 / FGSC 9923 / NRRL Y-1056) (Yeast) protein is Serine/threonine-protein kinase ISR1 (ISR1).